Consider the following 428-residue polypeptide: Sulfite exporter TauE/SafE family protein 6 (428 aa).

A run of 11 helical transmembrane segments spans residues 1–21 (MKTL…NANQ), 61–81 (ALVV…ASGI), 82–102 (GDGF…LKAA), 105–125 (FSAF…HFGC), 128–148 (LIDY…VSVG), 149–169 (VICN…VFLM), 245–265 (YWIL…LALS), 294–314 (VMSF…GMII), 332–352 (TSFM…LLGM), 356–376 (EAAY…LVFA), and 388–408 (IIVF…ASFG).

The protein belongs to the 4-toluene sulfonate uptake permease (TSUP) (TC 2.A.102) family.

It localises to the membrane. The chain is Sulfite exporter TauE/SafE family protein 6 from Arabidopsis thaliana (Mouse-ear cress).